The primary structure comprises 747 residues: Protein O-mannosyl-transferase 1 (747 aa).

Transmembrane regions (helical) follow at residues 8 to 28, 40 to 60, 68 to 88, 99 to 119, 122 to 142, 154 to 174, 183 to 203, 206 to 226, and 269 to 289; these read PVVV…MGLL, VVFD…QIFF, FGHM…NFLW, VPVW…VPMA, IVLE…LMLI, LLES…LKFF, SLSW…AVGI, MGVF…WHLL, and LLVI…ILVF. 3 MIR domains span residues 318–381, 392–449, and 453–513; these read PLEV…VKDP, PRPV…LEIV, and SDTD…VEEH. 3 N-linked (GlcNAc...) asparagine glycosylation sites follow: Asn-435, Asn-471, and Asn-539. The next 3 membrane-spanning stretches (helical) occupy residues 597-617, 636-656, and 661-681; these read IVIW…SLWY, WVLA…PFFL, and LFLY…PVVL.

The protein belongs to the glycosyltransferase 39 family. As to quaternary structure, interacts with POMT2. Widely expressed. Highly expressed in testis, heart and pancreas. Detected at lower levels in kidney, skeletal muscle, brain, placenta, lung and liver.

It localises to the endoplasmic reticulum membrane. It catalyses the reaction a di-trans,poly-cis-dolichyl beta-D-mannosyl phosphate + L-seryl-[protein] = 3-O-(alpha-D-mannosyl)-L-seryl-[protein] + a di-trans,poly-cis-dolichyl phosphate + H(+). The catalysed reaction is a di-trans,poly-cis-dolichyl beta-D-mannosyl phosphate + L-threonyl-[protein] = 3-O-(alpha-D-mannosyl)-L-threonyl-[protein] + a di-trans,poly-cis-dolichyl phosphate + H(+). It participates in protein modification; protein glycosylation. With respect to regulation, slightly activated by Mg(2+) and inhibited by both Ca(+) and Mn(2+). EDTA ha no effect on activity in vitro. Transfers mannosyl residues to the hydroxyl group of serine or threonine residues. Coexpression of both POMT1 and POMT2 is necessary for enzyme activity, expression of either POMT1 or POMT2 alone is insufficient. Essentially dedicated to O-mannosylation of alpha-DAG1 and few other proteins but not of cadherins and protocaherins. The polypeptide is Protein O-mannosyl-transferase 1 (POMT1) (Homo sapiens (Human)).